The sequence spans 156 residues: Jun dimerization protein 2 (156 aa).

The interval 56-95 (KRPFDAIKSEDDDDDERKKRRREKNKVAAARCRNRKKERT) is disordered. Positions 70-133 (DERKKRRREK…QQLIVMLNLH (64 aa)) constitute a bZIP domain. A basic motif region spans residues 72–94 (RKKRRREKNKVAAARCRNRKKER). The tract at residues 98–126 (LQKESERLEMLNSDLKSQIEELKSERQQL) is leucine-zipper.

It belongs to the bZIP family. ATF subfamily.

It localises to the nucleus. Component of the AP-1 transcription factor that represses transactivation mediated by the Jun family of proteins. This is Jun dimerization protein 2 (jdp2) from Danio rerio (Zebrafish).